Consider the following 258-residue polypeptide: Adenosylcobinamide-GDP ribazoletransferase (258 aa).

The next 6 membrane-spanning stretches (helical) occupy residues 41–61 (FFPL…WLAS), 65–85 (PAPG…TGAF), 115–135 (IGAF…QLLM), 136–156 (AMAA…HAAS), 197–217 (LPLL…LLAA), and 236–256 (CLGL…LAWT).

This sequence belongs to the CobS family. Requires Mg(2+) as cofactor.

Its subcellular location is the cell inner membrane. The enzyme catalyses alpha-ribazole + adenosylcob(III)inamide-GDP = adenosylcob(III)alamin + GMP + H(+). It carries out the reaction alpha-ribazole 5'-phosphate + adenosylcob(III)inamide-GDP = adenosylcob(III)alamin 5'-phosphate + GMP + H(+). The protein operates within cofactor biosynthesis; adenosylcobalamin biosynthesis; adenosylcobalamin from cob(II)yrinate a,c-diamide: step 7/7. Its function is as follows. Joins adenosylcobinamide-GDP and alpha-ribazole to generate adenosylcobalamin (Ado-cobalamin). Also synthesizes adenosylcobalamin 5'-phosphate from adenosylcobinamide-GDP and alpha-ribazole 5'-phosphate. The chain is Adenosylcobinamide-GDP ribazoletransferase from Ralstonia nicotianae (strain ATCC BAA-1114 / GMI1000) (Ralstonia solanacearum).